The primary structure comprises 84 residues: Small ribosomal subunit protein uS17 (84 aa).

It belongs to the universal ribosomal protein uS17 family. Part of the 30S ribosomal subunit.

One of the primary rRNA binding proteins, it binds specifically to the 5'-end of 16S ribosomal RNA. In Buchnera aphidicola subsp. Cinara cedri (strain Cc), this protein is Small ribosomal subunit protein uS17.